The sequence spans 896 residues: Vacuolar zinc transporter TgZnT (896 aa).

Residues 1-472 (MPFSCFVFSQ…ETGTQRARRK (472 aa)) lie on the Cytoplasmic side of the membrane. Over residues 82 to 91 (VLSSRGDESV) the composition is skewed to basic and acidic residues. 3 disordered regions span residues 82-104 (VLSS…SPGF), 205-227 (MKEI…RPCA), and 255-329 (SSSC…SSAS). Low complexity-rich tracts occupy residues 210 to 225 (SPRS…SSRP) and 255 to 266 (SSSCCSRSNSSS). Residues 303 to 322 (VHERRAEATCCAPRDRHGGD) are compositionally biased toward basic and acidic residues. The helical transmembrane segment at 473 to 493 (LVMASMVCCVFMFVEIVAGVL) threads the bilayer. Topologically, residues 494-502 (ANSLALMTD) are vacuolar. Residues 503-523 (ASHLLSDLCAFLISLFALWVS) form a helical membrane-spanning segment. Over 524–539 (ELKGNPSMSFGYHRAE) the chain is Cytoplasmic. A helical membrane pass occupies residues 540-560 (ILGALLSVFLIWVLTAVLIYA). Residues 561-573 (ACFRLVDPPQVDG) lie on the Vacuolar side of the membrane. A helical membrane pass occupies residues 574-594 (ELMFWTALLGTLANLFMTHIL). Topologically, residues 595–737 (KVHSHGIGQV…YENMNLRAAY (143 aa)) are cytoplasmic. The tract at residues 621-707 (LQASSSSPEK…RPFSASSAGS (87 aa)) is disordered. Basic and acidic residues predominate over residues 656-680 (RDAEAGRDAEAGRDAEAGRDAETGR). Residues 738-758 (IHALGDLLQNIGVMIASALIW) form a helical membrane-spanning segment. The Vacuolar portion of the chain corresponds to 759–762 (WRPD). The helical transmembrane segment at 763–783 (WAIADPICTFIFSIFVLFTTL) threads the bilayer. Topologically, residues 784–896 (SILKEALNVL…CSDPMKVFRR (113 aa)) are cytoplasmic.

This sequence belongs to the cation diffusion facilitator (CDF) transporter (TC 2.A.4) family. SLC30A subfamily.

The protein localises to the vacuole membrane. The protein resides in the cytoplasmic vesicle membrane. Vacuolar zinc transporter that is probably involved in the transfer of zinc ions from the cytosol to the vacuole for intracellular storage. Plays an essential role in extracellular zinc tolerance. This Toxoplasma gondii (strain ATCC 50853 / GT1) protein is Vacuolar zinc transporter TgZnT.